The sequence spans 202 residues: 3-isopropylmalate dehydratase small subunit (202 aa).

It belongs to the LeuD family. LeuD type 1 subfamily. As to quaternary structure, heterodimer of LeuC and LeuD.

The catalysed reaction is (2R,3S)-3-isopropylmalate = (2S)-2-isopropylmalate. Its pathway is amino-acid biosynthesis; L-leucine biosynthesis; L-leucine from 3-methyl-2-oxobutanoate: step 2/4. Its function is as follows. Catalyzes the isomerization between 2-isopropylmalate and 3-isopropylmalate, via the formation of 2-isopropylmaleate. This chain is 3-isopropylmalate dehydratase small subunit, found in Rhizobium rhizogenes (strain K84 / ATCC BAA-868) (Agrobacterium radiobacter).